Reading from the N-terminus, the 105-residue chain is Defensin-like protein 106 (105 aa).

A signal peptide spans 1-24; sequence MANTPKTLIAFVFSVIVIISYVHC. Disulfide bonds link cysteine 57/cysteine 94, cysteine 63/cysteine 87, cysteine 73/cysteine 92, and cysteine 77/cysteine 93.

It belongs to the DEFL family.

It is found in the secreted. This Arabidopsis thaliana (Mouse-ear cress) protein is Defensin-like protein 106.